The sequence spans 314 residues: MYSQQKQQDIINNLHTIRDYIRWSISEMTANNVYFGHGSESIWDEAVHLVLSAINVAHDIDSNMVGSRLLTEEKKIIIDYVYQRACLRKPLPYILKKAWFAGMEFDIDERVIIPRSPIAELIRNEFSPWINDIDDVTSVLDLCTGSGCIGIACSNVFEDANITLVDISDDALAVANHNIKKHQLSDRVRAIKSDLFDNLHGQKFDLIVSNPPYVDKQDLDTMPHEYHYEPKLALEAGDDGLDLAKRIILEADKYMTENGVLIVEVGNSQYALMEMCPDIPFTWLSFADGGDGVLLLTYDELVKYKDAFKKYFQK.

The protein belongs to the protein N5-glutamine methyltransferase family. PrmB subfamily.

The catalysed reaction is L-glutaminyl-[ribosomal protein uL3] + S-adenosyl-L-methionine = N(5)-methyl-L-glutaminyl-[ribosomal protein uL3] + S-adenosyl-L-homocysteine + H(+). Methylates large ribosomal subunit protein uL3 on a specific glutamine residue. This Francisella tularensis subsp. tularensis (strain SCHU S4 / Schu 4) protein is Ribosomal protein uL3 glutamine methyltransferase.